A 109-amino-acid polypeptide reads, in one-letter code: RNA-binding protein Hfq (109 aa).

The Sm domain occupies 9 to 68 (DPFLNALRKEKVSVSVYLVNGIKLQGQVEAFDQFCIVLRNTVNQMVYKHAISTIVPAKSV). The segment at 77–109 (PYHQNSNDEQDENVDDIHSDDLEIQENEGNIHE) is disordered.

Belongs to the Hfq family. In terms of assembly, homohexamer.

RNA chaperone that binds small regulatory RNA (sRNAs) and mRNAs to facilitate mRNA translational regulation in response to envelope stress, environmental stress and changes in metabolite concentrations. Also binds with high specificity to tRNAs. This chain is RNA-binding protein Hfq, found in Francisella tularensis subsp. holarctica (strain FTNF002-00 / FTA).